The sequence spans 127 residues: uncharacterized protein (127 aa).

A run of 2 helical transmembrane segments spans residues 48-68 and 83-103; these read LYSL…PLSI and VFLF…CLID.

It is found in the membrane. This is an uncharacterized protein from Saccharomyces cerevisiae (strain ATCC 204508 / S288c) (Baker's yeast).